A 1036-amino-acid chain; its full sequence is Isoleucine--tRNA ligase (1036 aa).

Residues 46–56 (PFATGLPHYGH) carry the 'HIGH' region motif. Positions 589–593 (KMSKR) match the 'KMSKS' region motif. Position 592 (K592) interacts with ATP.

The protein belongs to the class-I aminoacyl-tRNA synthetase family. IleS type 2 subfamily. In terms of assembly, monomer. It depends on Zn(2+) as a cofactor.

It is found in the cytoplasm. The enzyme catalyses tRNA(Ile) + L-isoleucine + ATP = L-isoleucyl-tRNA(Ile) + AMP + diphosphate. In terms of biological role, catalyzes the attachment of isoleucine to tRNA(Ile). As IleRS can inadvertently accommodate and process structurally similar amino acids such as valine, to avoid such errors it has two additional distinct tRNA(Ile)-dependent editing activities. One activity is designated as 'pretransfer' editing and involves the hydrolysis of activated Val-AMP. The other activity is designated 'posttransfer' editing and involves deacylation of mischarged Val-tRNA(Ile). This chain is Isoleucine--tRNA ligase, found in Chlamydia trachomatis serovar L2 (strain ATCC VR-902B / DSM 19102 / 434/Bu).